Reading from the N-terminus, the 435-residue chain is Asparagine--tRNA ligase (435 aa).

This sequence belongs to the class-II aminoacyl-tRNA synthetase family. Homodimer.

The protein localises to the cytoplasm. The catalysed reaction is tRNA(Asn) + L-asparagine + ATP = L-asparaginyl-tRNA(Asn) + AMP + diphosphate + H(+). The polypeptide is Asparagine--tRNA ligase (Leptospira interrogans serogroup Icterohaemorrhagiae serovar copenhageni (strain Fiocruz L1-130)).